Consider the following 230-residue polypeptide: Urease accessory protein UreF (230 aa).

The protein belongs to the UreF family. UreD, UreF and UreG form a complex that acts as a GTP-hydrolysis-dependent molecular chaperone, activating the urease apoprotein by helping to assemble the nickel containing metallocenter of UreC. The UreE protein probably delivers the nickel.

Its subcellular location is the cytoplasm. Its function is as follows. Required for maturation of urease via the functional incorporation of the urease nickel metallocenter. This is Urease accessory protein UreF from Cupriavidus metallidurans (strain ATCC 43123 / DSM 2839 / NBRC 102507 / CH34) (Ralstonia metallidurans).